Consider the following 466-residue polypeptide: Soluble pyridine nucleotide transhydrogenase (466 aa).

36 to 45 (ERYQNVGGGC) provides a ligand contact to FAD.

It belongs to the class-I pyridine nucleotide-disulfide oxidoreductase family. FAD is required as a cofactor.

Its subcellular location is the cytoplasm. It catalyses the reaction NAD(+) + NADPH = NADH + NADP(+). Its function is as follows. Conversion of NADPH, generated by peripheral catabolic pathways, to NADH, which can enter the respiratory chain for energy generation. The chain is Soluble pyridine nucleotide transhydrogenase from Escherichia coli O127:H6 (strain E2348/69 / EPEC).